The following is a 218-amino-acid chain: Thiopurine S-methyltransferase (218 aa).

4 residues coordinate S-adenosyl-L-methionine: W10, L45, E66, and R123.

Belongs to the class I-like SAM-binding methyltransferase superfamily. TPMT family.

The protein localises to the cytoplasm. It carries out the reaction S-adenosyl-L-methionine + a thiopurine = S-adenosyl-L-homocysteine + a thiopurine S-methylether.. The protein is Thiopurine S-methyltransferase of Shewanella baltica (strain OS185).